Consider the following 1373-residue polypeptide: Capping protein, Arp2/3 and myosin-I linker protein 3 (1373 aa).

Residues 126–151 (RGNADTPEGPRDTSPNSETSTSTTHS) form a disordered region. The segment covering 138 to 151 (TSPNSETSTSTTHS) has biased composition (low complexity). LRR repeat units lie at residues 242–269 (SGSLEELVLDNAGLKTDFVQKLAGVFGE), 272–299 (SCVLHALTLSHNPIEDKGFLSLSQQLLC), 333–358 (ASSLRYLDLSKNPGLLATDEANALYS), 390–417 (CSHLTYLNLARNSCSHRKGREAPPAFKQ), 422–446 (AYTLSHVNLSATRLPLEALRALLQG), 453–475 (LSDLHLDLSSCELRSAGAQALQE), 480–507 (VTCIGSLDLSDNGFDSDLLTLVPALGKN), 510–536 (LKHLFLGKNFNVKAKTLEEILHKLVQL), 541–564 (DCSLQSLSVADSRLKLRTSILINA), and 568–591 (NTCLAKVDLSGNGMEDIGAKMLSK). Disordered regions lie at residues 864–902 (RTLSDPPGGAGPGQDPSSRGRGRSHDHEETDDELGTNID) and 970–1373 (LRHQ…PGTD). Residues 981-997 (PRTTPPGPGRPSVPVPG) are compositionally biased toward pro residues. Basic and acidic residues predominate over residues 1007–1022 (RLDEGLEDFFSRRVMD). The span at 1047–1062 (QKRRRRGLFHFRRPRS) shows a compositional bias: basic residues. The segment covering 1078-1097 (LPPPPPPPPTQESPPSPDPP) has biased composition (pro residues). Residues 1098-1108 (SLGNNSSPCWS) show a composition bias toward low complexity. Over residues 1218–1228 (RRAEATWHIAE) the composition is skewed to basic and acidic residues. Residues 1232 to 1243 (PNHSCQSPSPAS) are compositionally biased toward polar residues. Over residues 1269-1278 (PIGPRPPKPV) the composition is skewed to pro residues. Positions 1345–1358 (QSCDKLEPDRRRPP) are enriched in basic and acidic residues.

The protein belongs to the CARMIL family. As to expression, widely expressed, with much higher levels in fetal tissues than in adult ones. Highly expressed in newborn brain.

It localises to the cytoplasm. It is found in the cell membrane. The chain is Capping protein, Arp2/3 and myosin-I linker protein 3 (Carmil3) from Rattus norvegicus (Rat).